The chain runs to 62 residues: Large ribosomal subunit protein bL28 (62 aa).

It belongs to the bacterial ribosomal protein bL28 family.

The protein is Large ribosomal subunit protein bL28 of Frankia casuarinae (strain DSM 45818 / CECT 9043 / HFP020203 / CcI3).